Consider the following 103-residue polypeptide: Large ribosomal subunit protein bL21 (103 aa).

Belongs to the bacterial ribosomal protein bL21 family. As to quaternary structure, part of the 50S ribosomal subunit. Contacts protein L20.

Its function is as follows. This protein binds to 23S rRNA in the presence of protein L20. In Salmonella schwarzengrund (strain CVM19633), this protein is Large ribosomal subunit protein bL21.